The primary structure comprises 157 residues: 2-C-methyl-D-erythritol 2,4-cyclodiphosphate synthase (157 aa).

A divalent metal cation-binding residues include Asp-8 and His-10. 4-CDP-2-C-methyl-D-erythritol 2-phosphate-binding positions include 8–10 (DVH) and 34–35 (HS). An a divalent metal cation-binding site is contributed by His-42. 4-CDP-2-C-methyl-D-erythritol 2-phosphate-binding positions include 56–58 (DIG), 132–135 (TTNE), Phe-139, and Arg-142.

It belongs to the IspF family. In terms of assembly, homotrimer. A divalent metal cation serves as cofactor.

It carries out the reaction 4-CDP-2-C-methyl-D-erythritol 2-phosphate = 2-C-methyl-D-erythritol 2,4-cyclic diphosphate + CMP. It functions in the pathway isoprenoid biosynthesis; isopentenyl diphosphate biosynthesis via DXP pathway; isopentenyl diphosphate from 1-deoxy-D-xylulose 5-phosphate: step 4/6. Its function is as follows. Involved in the biosynthesis of isopentenyl diphosphate (IPP) and dimethylallyl diphosphate (DMAPP), two major building blocks of isoprenoid compounds. Catalyzes the conversion of 4-diphosphocytidyl-2-C-methyl-D-erythritol 2-phosphate (CDP-ME2P) to 2-C-methyl-D-erythritol 2,4-cyclodiphosphate (ME-CPP) with a corresponding release of cytidine 5-monophosphate (CMP). This Symbiobacterium thermophilum (strain DSM 24528 / JCM 14929 / IAM 14863 / T) protein is 2-C-methyl-D-erythritol 2,4-cyclodiphosphate synthase.